Reading from the N-terminus, the 140-residue chain is Organic hydroperoxide resistance protein-like (140 aa).

The protein belongs to the OsmC/Ohr family.

This is Organic hydroperoxide resistance protein-like from Staphylococcus aureus (strain MSSA476).